A 117-amino-acid chain; its full sequence is Photosystem II reaction center Psb28 protein (117 aa).

It belongs to the Psb28 family. Part of the photosystem II complex.

The protein localises to the cellular thylakoid membrane. This chain is Photosystem II reaction center Psb28 protein, found in Prochlorococcus marinus (strain MIT 9301).